A 235-amino-acid chain; its full sequence is MLTLLAILTVSYIIGSIPTSIMAGKMMKGIDIRNFGSGNAGGTNAFRVLGWKTGLTVTLIDIVKGVVAAVSVVAFFRHHPIGAFPDINEVALRLLAGMSAVIGHVFTVFAGFKGGKGVSTAAGMLIGIAPVSMLMVIGIFLLTVWFSRYVSVASIFAAVAFPLIIAIRKYVFELGGGLDYYIRLFGESFSFHDSLDYHLIIFGLLVAFAILFTHRANIRRLISGTENRVTFRKHA.

The next 6 helical transmembrane spans lie at 4 to 24 (LLAI…IMAG), 56 to 76 (TVTL…VAFF), 94 to 114 (LLAG…GFKG), 126 to 146 (IGIA…TVWF), 152 to 172 (VASI…KYVF), and 194 to 214 (SLDY…LFTH).

The protein belongs to the PlsY family. Probably interacts with PlsX.

It is found in the cell inner membrane. It carries out the reaction an acyl phosphate + sn-glycerol 3-phosphate = a 1-acyl-sn-glycero-3-phosphate + phosphate. It participates in lipid metabolism; phospholipid metabolism. Catalyzes the transfer of an acyl group from acyl-phosphate (acyl-PO(4)) to glycerol-3-phosphate (G3P) to form lysophosphatidic acid (LPA). This enzyme utilizes acyl-phosphate as fatty acyl donor, but not acyl-CoA or acyl-ACP. The polypeptide is Glycerol-3-phosphate acyltransferase (Chlorobium phaeovibrioides (strain DSM 265 / 1930) (Prosthecochloris vibrioformis (strain DSM 265))).